The primary structure comprises 498 residues: Interferon regulatory factor 5 (498 aa).

Thr-10 carries the post-translational modification Phosphothreonine. A Nuclear localization signal motif is present at residues 12 to 18; it reads PRRVRLK. Positions 14–122 form a DNA-binding region, IRF tryptophan pentad repeat; the sequence is RVRLKPWLVA…QPYKIYEVCS (109 aa). Residues 121–207 form a disordered region; that stretch reads CSNGPAPTDS…SPLAPPPGNP (87 aa). Residues 150–160 carry the Nuclear export signal motif; it reads LQRMLPSLSLT. Phosphoserine; by TBK1 is present on Ser-158. The segment covering 168–206 has biased composition (pro residues); it reads TLQPPTLRPPTLQPPTLQPPVVLGPPAPDPSPLAPPPGN. A Phosphoserine; by TBK1 modification is found at Ser-293. At Ser-301 the chain carries Phosphoserine. Residues Lys-411 and Lys-412 each participate in a glycyl lysine isopeptide (Lys-Gly) (interchain with G-Cter in ubiquitin) cross-link. Phosphoserine is present on residues Ser-431, Ser-435, Ser-437, and Ser-440. Ser-446 carries the phosphoserine; by IKKB modification. The interval 478-498 is disordered; sequence PPGAGLGVGQGPWPMHPAGMQ.

This sequence belongs to the IRF family. Homodimer, when phosphorylated. Interacts with TASL (via pLxIS motif); interaction takes place downstream of TLR7, TLR8 or TLR9, leading to its activation. Interacts with MYD88 and TRAF6. Post-translationally, phosphorylation of serine and threonine residues by IKBKB in a C-terminal autoinhibitory region, stimulates dimerization, transport into the nucleus, assembly with the coactivator CBP/EP300 and initiation of transcription. 'Lys-63'-linked polyubiquitination by TRAF6 is required for activation.

The protein resides in the cytoplasm. It is found in the nucleus. Its activity is regulated as follows. Maintained as a monomer in an autoinhibited state. Phosphorylation and activation follow the following steps: innate adapter protein TASL recruits IRF5, thereby licensing IRF5 for phosphorylation by IKBKB. Phosphorylated IRF5 dissociates from the adapter proteins, dimerizes, and then enters the nucleus to induce IFNs. (Microbial infection) Activated upon coronavirus SARS-CoV-2 infection. Transcription factor that plays a critical role in innate immunity by activating expression of type I interferon (IFN) IFNA and INFB and inflammatory cytokines downstream of endolysosomal toll-like receptors TLR7, TLR8 and TLR9. Regulates the transcription of type I IFN genes (IFN-alpha and IFN-beta) and IFN-stimulated genes (ISG) by binding to an interferon-stimulated response element (ISRE) in their promoters. Can efficiently activate both the IFN-beta (IFNB) and the IFN-alpha (IFNA) genes and mediate their induction downstream of the TLR-activated, MyD88-dependent pathway. Key transcription factor regulating the IFN response during SARS-CoV-2 infection. This is Interferon regulatory factor 5 from Homo sapiens (Human).